Here is a 342-residue protein sequence, read N- to C-terminus: tRNA N6-adenosine threonylcarbamoyltransferase (342 aa).

Fe cation contacts are provided by H114 and H118. Substrate is bound by residues 136-140, D169, G182, D186, and N275; that span reads LVSGG. D301 contributes to the Fe cation binding site.

It belongs to the KAE1 / TsaD family. It depends on Fe(2+) as a cofactor.

The protein resides in the cytoplasm. The enzyme catalyses L-threonylcarbamoyladenylate + adenosine(37) in tRNA = N(6)-L-threonylcarbamoyladenosine(37) in tRNA + AMP + H(+). Its function is as follows. Required for the formation of a threonylcarbamoyl group on adenosine at position 37 (t(6)A37) in tRNAs that read codons beginning with adenine. Is involved in the transfer of the threonylcarbamoyl moiety of threonylcarbamoyl-AMP (TC-AMP) to the N6 group of A37, together with TsaE and TsaB. TsaD likely plays a direct catalytic role in this reaction. The sequence is that of tRNA N6-adenosine threonylcarbamoyltransferase from Streptococcus pyogenes serotype M3 (strain ATCC BAA-595 / MGAS315).